Here is a 116-residue protein sequence, read N- to C-terminus: Proline-rich protein 9 (116 aa).

This is Proline-rich protein 9 (PRR9) from Bos taurus (Bovine).